The sequence spans 1167 residues: Rhoptry neck protein 2-like protein 2 (1167 aa).

Positions 1 to 20 are cleaved as a signal peptide; it reads MSSNLAFLSLSLAESTASLG. Topologically, residues 21 to 977 are cytoplasmic; sequence KSLEETRTRL…WVAKRSRSRK (957 aa). Residues 55 to 94 are disordered; it reads GPGLSVEGKQTEQMSRKSAEDTRASSLSSDPDDGRAAQLA. The segment covering 68 to 77 has biased composition (basic and acidic residues); that stretch reads MSRKSAEDTR. A helical transmembrane segment spans residues 978–998; sequence LAIVSVLSLGLIFAYTLLSAL. The Extracellular portion of the chain corresponds to 999–1167; the sequence is DIAQFLTDSG…TPQRAQDGSR (169 aa). Cys1015 and Cys1026 are disulfide-bonded.

This sequence belongs to the apicomplexan parasites RON2 family.

It localises to the secreted. It is found in the host cell membrane. Its function is as follows. May play a role in host cell invasion. The protein is Rhoptry neck protein 2-like protein 2 (RON2L2) of Toxoplasma gondii (strain ATCC 50611 / Me49).